The primary structure comprises 158 residues: Large ribosomal subunit protein bL21 (158 aa).

A disordered region spans residues 106–158 (SKPKKAAAKPIKEEATAAKGTKDTAVEKKAEKTAEKKTASQKKAAVASKSKKD). The span at 115-143 (PIKEEATAAKGTKDTAVEKKAEKTAEKKT) shows a compositional bias: basic and acidic residues. The segment covering 146 to 158 (QKKAAVASKSKKD) has biased composition (low complexity).

The protein belongs to the bacterial ribosomal protein bL21 family. Part of the 50S ribosomal subunit. Contacts protein L20.

In terms of biological role, this protein binds to 23S rRNA in the presence of protein L20. This Bartonella tribocorum (strain CIP 105476 / IBS 506) protein is Large ribosomal subunit protein bL21.